We begin with the raw amino-acid sequence, 389 residues long: Chalcone synthase 9 (389 aa).

C164 is an active-site residue.

This sequence belongs to the thiolase-like superfamily. Chalcone/stilbene synthases family.

It carries out the reaction (E)-4-coumaroyl-CoA + 3 malonyl-CoA + 3 H(+) = 2',4,4',6'-tetrahydroxychalcone + 3 CO2 + 4 CoA. Its pathway is secondary metabolite biosynthesis; flavonoid biosynthesis. Its function is as follows. The primary product of this enzyme is 4,2',4',6'-tetrahydroxychalcone (also termed naringenin-chalcone or chalcone) which can under specific conditions spontaneously isomerize into naringenin. This is Chalcone synthase 9 (CHS9) from Medicago sativa (Alfalfa).